A 957-amino-acid polypeptide reads, in one-letter code: Collagen alpha-1(I) chain (957 aa).

The segment at 1–957 is disordered; sequence GPMGPSGPRG…PGPPGPPGPP (957 aa). Residues 23–33 show a composition bias toward low complexity; it reads FPGEPGASGPM. The span at 45 to 59 shows a compositional bias: basic and acidic residues; sequence NGDDGEAGKPGRPGE. S87 carries the phosphoserine modification. Low complexity-rich tracts occupy residues 95–113 and 125–138; these read DAGP…PRGI and PAGA…TGAA. Residues 140–152 are compositionally biased toward pro residues; sequence PPGPTGPAGPPGF. Low complexity-rich tracts occupy residues 186–210 and 219–228; these read AGAA…RGPS and SGPKGNSGEP. Gly residues predominate over residues 277–286; sequence GERGGPGSRG. Composition is skewed to low complexity over residues 330-356, 365-384, 426-453, 488-516, 576-590, 603-618, 649-665, and 707-731; these read KGIT…QDGR, ARGQ…AGEP, QGPA…PGEQ, PRGA…QGAP, AGPS…ARGA, AGFA…PGAK, SAGP…AGRV, and AGEK…QGIA. Position 579 is a phosphoserine (S579). Composition is skewed to pro residues over residues 772-782 and 818-833; these read PPGPMGPPGIA and AGPP…PGPV. The span at 854 to 868 shows a compositional bias: low complexity; it reads IGPVGARGAAGPQGP. The segment covering 869–883 has biased composition (basic and acidic residues); sequence RGDKGETGEQGDRGI. Positions 902–935 are enriched in low complexity; sequence PGEQGPSGASGPAGPRGPPGSAGSPGKDGINGIP. Residues 937 to 957 are compositionally biased toward pro residues; sequence PIGPPGPRPGPPGPPGPPGPP.

It belongs to the fibrillar collagen family. In terms of assembly, trimers of one alpha 2(I) and two alpha 1(I) chains. Post-translationally, prolines at the third position of the tripeptide repeating unit (G-X-Y) are hydroxylated in some or all of the chains. Forms the fibrils of tendon, ligaments and bones. In bones, the fibrils are mineralized with calcium hydroxyapatite.

The protein localises to the secreted. It localises to the extracellular space. It is found in the extracellular matrix. In terms of biological role, type I collagen is a member of group I collagen (fibrillar forming collagen). This is Collagen alpha-1(I) chain from Hippopotamus amphibius (Hippopotamus).